An 854-amino-acid polypeptide reads, in one-letter code: V-type proton ATPase 116 kDa subunit a 2 (854 aa).

Residues 1–393 (MGSLFRSETM…DAYGVGSYQE (393 aa)) lie on the Cytoplasmic side of the membrane. Residues 394–412 (VNPALFTIITFPFLFAVMF) form a helical membrane-spanning segment. Residues 413–414 (GD) are Vacuolar-facing. A helical transmembrane segment spans residues 415-431 (FGHGFVMFLFALLLVLN). Topologically, residues 432-445 (ENHPRLNQSQEIMR) are cytoplasmic. Residues 446 to 475 (MFFNGRYILLLMGLFSVYTGLIYNDCFSKS) traverse the membrane as a helical segment. Residues 476–549 (VNLFGSRWNV…ATNRLTFLNS (74 aa)) are Vacuolar-facing. The helical transmembrane segment at 550 to 569 (FKMKMSVILGITHMTFGVIL) threads the bilayer. At 570–587 (GIFNHLHFRKKFNICLVS) the chain is on the cytoplasmic side. A helical transmembrane segment spans residues 588–608 (IPELLFMLCIFGYLIFMIIYK). Over 609 to 651 (WLVYSAETSRTAPSILIEFISMFLFLASDTGGLYPGQEHVQRL) the chain is Vacuolar. The helical transmembrane segment at 652-671 (LLLITVLSVPVLFLGKPLFL) threads the bilayer. The Cytoplasmic segment spans residues 672–739 (LWLHRGRSCF…EILMTQIIHS (68 aa)). S695 and S700 each carry phosphoserine. The chain crosses the membrane as a helical span at residues 740-764 (IEYCLGCISNTASYLRLWALSLAHA). The Vacuolar portion of the chain corresponds to 765–785 (QLSEVLWAMLMHVGLRVDTAY). The helical transmembrane segment at 786-824 (GVLVLLPVIAFFAVLTIFILLIMEGLSAFLHAIRLHWVE) threads the bilayer. Residues 825–854 (FQNKFYVGAGTKFVPFSFRLLSSKFSDDLA) lie on the Cytoplasmic side of the membrane.

Belongs to the V-ATPase 116 kDa subunit family. V-ATPase is a heteromultimeric enzyme made up of two complexes: the ATP-hydrolytic V1 complex and the proton translocation V0 complex. The V1 complex consists of three catalytic AB heterodimers that form a heterohexamer, three peripheral stalks each consisting of EG heterodimers, one central rotor including subunits D and F, and the regulatory subunits C and H. The proton translocation complex V0 consists of the proton transport subunit a, a ring of proteolipid subunits c9c'', rotary subunit d, subunits e and f, and the accessory subunits ATP6AP1/Ac45 and ATP6AP2/PRR. Directly interacts with PSCD2 through its N-terminal cytosolic tail in an intra-endosomal acidification-dependent manner. Disruption of this interaction results in the inhibition of endocytosis. Interacts with SPAAR. As to expression, highly expressed in lung, kidney and spleen.

The protein localises to the cell membrane. The protein resides in the endosome membrane. Functionally, subunit of the V0 complex of vacuolar(H+)-ATPase (V-ATPase), a multisubunit enzyme composed of a peripheral complex (V1) that hydrolyzes ATP and a membrane integral complex (V0) that translocates protons. V-ATPase is responsible for acidifying and maintaining the pH of intracellular compartments and in some cell types, is targeted to the plasma membrane, where it is responsible for acidifying the extracellular environment. Essential component of the endosomal pH-sensing machinery. May play a role in maintaining the Golgi functions, such as glycosylation maturation, by controlling the Golgi pH. In aerobic conditions, involved in intracellular iron homeostasis, thus triggering the activity of Fe(2+) prolyl hydroxylase (PHD) enzymes, and leading to HIF1A hydroxylation and subsequent proteasomal degradation. This chain is V-type proton ATPase 116 kDa subunit a 2 (ATP6V0A2), found in Bos taurus (Bovine).